A 313-amino-acid chain; its full sequence is uncharacterized protein (313 aa).

6 helical membrane-spanning segments follow: residues 16-36 (AGTW…AFLA), 106-126 (FTIL…ANEF), 155-175 (FGLL…LIFF), 208-228 (LSES…SAVF), 233-253 (LAVG…AFIA), and 286-306 (FSLV…FGIF).

It localises to the cell membrane. This is an uncharacterized protein from Bacillus subtilis (strain 168).